A 198-amino-acid polypeptide reads, in one-letter code: Thymidylate kinase (198 aa).

Residue 10–17 (GLDGSGKT) participates in ATP binding.

Belongs to the thymidylate kinase family.

It catalyses the reaction dTMP + ATP = dTDP + ADP. In terms of biological role, phosphorylation of dTMP to form dTDP in both de novo and salvage pathways of dTTP synthesis. This is Thymidylate kinase from Thermus thermophilus (strain ATCC BAA-163 / DSM 7039 / HB27).